We begin with the raw amino-acid sequence, 358 residues long: Phosphoserine aminotransferase (358 aa).

L-glutamate is bound at residue arginine 41. Pyridoxal 5'-phosphate is bound by residues 75 to 76 (AS), tryptophan 100, threonine 148, aspartate 167, and glutamine 190. Lysine 191 carries the N6-(pyridoxal phosphate)lysine modification. 233–234 (NT) lines the pyridoxal 5'-phosphate pocket.

Belongs to the class-V pyridoxal-phosphate-dependent aminotransferase family. SerC subfamily. In terms of assembly, homodimer. It depends on pyridoxal 5'-phosphate as a cofactor.

It localises to the cytoplasm. It carries out the reaction O-phospho-L-serine + 2-oxoglutarate = 3-phosphooxypyruvate + L-glutamate. The catalysed reaction is 4-(phosphooxy)-L-threonine + 2-oxoglutarate = (R)-3-hydroxy-2-oxo-4-phosphooxybutanoate + L-glutamate. The protein operates within amino-acid biosynthesis; L-serine biosynthesis; L-serine from 3-phospho-D-glycerate: step 2/3. Its pathway is cofactor biosynthesis; pyridoxine 5'-phosphate biosynthesis; pyridoxine 5'-phosphate from D-erythrose 4-phosphate: step 3/5. Its function is as follows. Catalyzes the reversible conversion of 3-phosphohydroxypyruvate to phosphoserine and of 3-hydroxy-2-oxo-4-phosphonooxybutanoate to phosphohydroxythreonine. This chain is Phosphoserine aminotransferase, found in Campylobacter jejuni subsp. jejuni serotype O:2 (strain ATCC 700819 / NCTC 11168).